The following is a 482-amino-acid chain: L-propargylglycine--L-glutamate ligase (482 aa).

The catalysed reaction is L-propargylglycine + L-glutamate + ATP = L-gamma-glutamyl-L-propargylglycine + ADP + phosphate + H(+). Its pathway is amino-acid metabolism. It functions in the pathway antibiotic biosynthesis. Its function is as follows. Involved in the biosynthesis of terminal alkyne-containing amino acids such as L-beta-ethynylserine, that are produced as antibiotics by S.cattleya. Catalyzes the ATP-dependent ligation of L-propargylglycine to L-glutamate to form the dipeptide L-gamma-glutamyl-L-propargylglycine. Is selective for L-propargylglycine over norvaline, allylglycine and the standard proteinogenic amino acids, except L-cysteine which can be used as a substrate to a lesser extent. The chain is L-propargylglycine--L-glutamate ligase from Streptantibioticus cattleyicolor (strain ATCC 35852 / DSM 46488 / JCM 4925 / NBRC 14057 / NRRL 8057) (Streptomyces cattleya).